An 89-amino-acid chain; its full sequence is Large ribosomal subunit protein bL27 (89 aa).

Positions 1 to 20 (MAHKKAGGSSRNGRDSAGRR) are disordered.

This sequence belongs to the bacterial ribosomal protein bL27 family.

The chain is Large ribosomal subunit protein bL27 from Rhizorhabdus wittichii (strain DSM 6014 / CCUG 31198 / JCM 15750 / NBRC 105917 / EY 4224 / RW1) (Sphingomonas wittichii).